Here is a 336-residue protein sequence, read N- to C-terminus: MLPALTDLAQFRDLLGAAPGPDAAARAGAEERNGQLTKPPGALGRLEDLAIWYAGWRGDARPRIEAPQVIVFAGNHGVTAQGVSAFPAEVTVQMVMNFEHGGAAINQLARAAGARMDVHALELDRPTQDFTQAPAMTGDELLAALQCGWAAVDPAADLLVVGEMGIGNTTPAAAIAHALFGGAAGDWTGRGTGVDDAGLANKTRVVAEGVALHTSRDGLEVLRCLGGREIAAMAGAIAAARQLRIPVILDGFICTAAAAALAAVAANALDHTVAGHQSAEGAHAVLLAKLGKAPLLSLGLRLGEGSGGALAINILKSAVACHSGMATFAEAGVSDG.

Positions 20–41 (GPDAAARAGAEERNGQLTKPPG) are disordered. Residue Glu-304 is the Proton acceptor of the active site.

Belongs to the CobT family.

The enzyme catalyses 5,6-dimethylbenzimidazole + nicotinate beta-D-ribonucleotide = alpha-ribazole 5'-phosphate + nicotinate + H(+). Its pathway is nucleoside biosynthesis; alpha-ribazole biosynthesis; alpha-ribazole from 5,6-dimethylbenzimidazole: step 1/2. Its function is as follows. Catalyzes the synthesis of alpha-ribazole-5'-phosphate from nicotinate mononucleotide (NAMN) and 5,6-dimethylbenzimidazole (DMB). This Ruegeria pomeroyi (strain ATCC 700808 / DSM 15171 / DSS-3) (Silicibacter pomeroyi) protein is Nicotinate-nucleotide--dimethylbenzimidazole phosphoribosyltransferase.